Reading from the N-terminus, the 96-residue chain is Pyrimidine/purine nucleoside phosphorylase (96 aa).

Belongs to the nucleoside phosphorylase PpnP family.

It catalyses the reaction a purine D-ribonucleoside + phosphate = a purine nucleobase + alpha-D-ribose 1-phosphate. The catalysed reaction is adenosine + phosphate = alpha-D-ribose 1-phosphate + adenine. It carries out the reaction cytidine + phosphate = cytosine + alpha-D-ribose 1-phosphate. The enzyme catalyses guanosine + phosphate = alpha-D-ribose 1-phosphate + guanine. It catalyses the reaction inosine + phosphate = alpha-D-ribose 1-phosphate + hypoxanthine. The catalysed reaction is thymidine + phosphate = 2-deoxy-alpha-D-ribose 1-phosphate + thymine. It carries out the reaction uridine + phosphate = alpha-D-ribose 1-phosphate + uracil. The enzyme catalyses xanthosine + phosphate = alpha-D-ribose 1-phosphate + xanthine. Functionally, catalyzes the phosphorolysis of diverse nucleosides, yielding D-ribose 1-phosphate and the respective free bases. Can use uridine, adenosine, guanosine, cytidine, thymidine, inosine and xanthosine as substrates. Also catalyzes the reverse reactions. The chain is Pyrimidine/purine nucleoside phosphorylase from Serratia proteamaculans (strain 568).